Consider the following 256-residue polypeptide: Thiazole synthase (256 aa).

Lysine 95 acts as the Schiff-base intermediate with DXP in catalysis. Residues glycine 156, 182-183 (AG), and 204-205 (NT) contribute to the 1-deoxy-D-xylulose 5-phosphate site.

This sequence belongs to the ThiG family. Homotetramer. Forms heterodimers with either ThiH or ThiS.

Its subcellular location is the cytoplasm. The catalysed reaction is [ThiS sulfur-carrier protein]-C-terminal-Gly-aminoethanethioate + 2-iminoacetate + 1-deoxy-D-xylulose 5-phosphate = [ThiS sulfur-carrier protein]-C-terminal Gly-Gly + 2-[(2R,5Z)-2-carboxy-4-methylthiazol-5(2H)-ylidene]ethyl phosphate + 2 H2O + H(+). It functions in the pathway cofactor biosynthesis; thiamine diphosphate biosynthesis. In terms of biological role, catalyzes the rearrangement of 1-deoxy-D-xylulose 5-phosphate (DXP) to produce the thiazole phosphate moiety of thiamine. Sulfur is provided by the thiocarboxylate moiety of the carrier protein ThiS. In vitro, sulfur can be provided by H(2)S. The sequence is that of Thiazole synthase from Salmonella paratyphi B (strain ATCC BAA-1250 / SPB7).